Here is a 420-residue protein sequence, read N- to C-terminus: Threonine aspartase 1 (420 aa).

The interval 1–23 (MTMEKGMSSGEGLPSRSSQVSAG) is disordered. Residue threonine 234 is the Nucleophile of the active site.

It belongs to the Ntn-hydrolase family. Intramolecular proteolysis generates 2 subunits, alpha and beta, which reassemble through a non-covalent association to form the fully active enzyme.

Protease responsible for KMT2A/MLL1 processing and activation. It also activates KMT2D/MLL2. Through substrate activation, it controls the expression of HOXA genes, and the expression of key cell cycle regulators including CCNA1, CCNB1, CCNE1 and CDKN2A. The protein is Threonine aspartase 1 (TASP1) of Homo sapiens (Human).